The chain runs to 519 residues: ATP synthase subunit alpha 1 (519 aa).

172-179 (GDRQTGKT) is an ATP binding site.

Belongs to the ATPase alpha/beta chains family. As to quaternary structure, F-type ATPases have 2 components, CF(1) - the catalytic core - and CF(0) - the membrane proton channel. CF(1) has five subunits: alpha(3), beta(3), gamma(1), delta(1), epsilon(1). CF(0) has three main subunits: a(1), b(2) and c(9-12). The alpha and beta chains form an alternating ring which encloses part of the gamma chain. CF(1) is attached to CF(0) by a central stalk formed by the gamma and epsilon chains, while a peripheral stalk is formed by the delta and b chains.

The protein localises to the cell inner membrane. The catalysed reaction is ATP + H2O + 4 H(+)(in) = ADP + phosphate + 5 H(+)(out). In terms of biological role, produces ATP from ADP in the presence of a proton gradient across the membrane. The alpha chain is a regulatory subunit. In Psychromonas ingrahamii (strain DSM 17664 / CCUG 51855 / 37), this protein is ATP synthase subunit alpha 1.